The following is a 232-amino-acid chain: A-type ATP synthase subunit D (232 aa).

The protein belongs to the V-ATPase D subunit family. In terms of assembly, has multiple subunits with at least A(3), B(3), C, D, E, F, H, I and proteolipid K(x).

It is found in the cell membrane. Component of the A-type ATP synthase that produces ATP from ADP in the presence of a proton gradient across the membrane. This is A-type ATP synthase subunit D from Methanopyrus kandleri (strain AV19 / DSM 6324 / JCM 9639 / NBRC 100938).